The chain runs to 258 residues: Peptidase inhibitor 15 (258 aa).

The first 21 residues, 1–21, serve as a signal peptide directing secretion; it reads MIEMISISAAFLLSLLCETCG. The propeptide occupies 22–60; that stretch reads LVLPKSSDLAIAASNYTIIKPDLSARLDPVKAPKARRKR. N-linked (GlcNAc...) asparagine glycans are attached at residues Asn-36 and Asn-124. Positions 71–211 constitute an SCP domain; sequence VEYHNQVRGK…RRAVYLVCNY (141 aa).

Belongs to the CRISP family.

It localises to the secreted. In terms of biological role, serine protease inhibitor which displays weak inhibitory activity against trypsin. May be involved in facial patterning during embryonic development. The polypeptide is Peptidase inhibitor 15 (pi15) (Xenopus laevis (African clawed frog)).